The following is a 281-amino-acid chain: Transmembrane protein 163 (281 aa).

The Cytoplasmic segment spans residues 1–80 (MEPLDTELCY…HEAQNYRKKA (80 aa)). A disordered region spans residues 16-44 (IVQPSCNGQTPPGHRTLSPTQQMDHEQQM). A helical transmembrane segment spans residues 81 to 101 (LWVSWLSIAITLILAIAAFTV). Topologically, residues 102–108 (SVMRYSA) are extracellular. The helical transmembrane segment at 109–129 (SSFGFALDAVLDVLSSAIVLW) threads the bilayer. Topologically, residues 130–145 (RYSNAAAVHSAHREYM) are cytoplasmic. Residues 146–166 (ACCILGVIFLLSSICIVSKAI) traverse the membrane as a helical segment. Topologically, residues 167–179 (HDLSIRVMPEVDG) are extracellular. Residues 180 to 200 (FLFSVSILSGILCSLLAAIKF) traverse the membrane as a helical segment. At 201–209 (MLGKVLTSR) the chain is on the cytoplasmic side. A helical transmembrane segment spans residues 210–230 (ALITDGFNSLVGGIMGFSILL). Topologically, residues 231–240 (SAEVYKHNSK) are extracellular. Residues 241-261 (VWYLDGSVGILIGLIIMSYGI) traverse the membrane as a helical segment. The Cytoplasmic segment spans residues 262 to 281 (KLLMDMVPRVRQTRHYEMFE).

The protein belongs to the TMEM163 family.

It localises to the cytoplasmic vesicle. The protein localises to the secretory vesicle. The protein resides in the synaptic vesicle membrane. It is found in the early endosome membrane. May bind zinc and other divalent cations and recruit them to vesicular organelles. In Xenopus laevis (African clawed frog), this protein is Transmembrane protein 163 (tmem163).